Reading from the N-terminus, the 490-residue chain is ATP synthase subunit beta, chloroplastic (490 aa).

170 to 177 is a binding site for ATP; that stretch reads GGAGVGKT.

This sequence belongs to the ATPase alpha/beta chains family. F-type ATPases have 2 components, CF(1) - the catalytic core - and CF(0) - the membrane proton channel. CF(1) has five subunits: alpha(3), beta(3), gamma(1), delta(1), epsilon(1). CF(0) has four main subunits: a(1), b(1), b'(1) and c(9-12).

It localises to the plastid. It is found in the chloroplast thylakoid membrane. The enzyme catalyses ATP + H2O + 4 H(+)(in) = ADP + phosphate + 5 H(+)(out). Produces ATP from ADP in the presence of a proton gradient across the membrane. The catalytic sites are hosted primarily by the beta subunits. This chain is ATP synthase subunit beta, chloroplastic, found in Ipomoea obscura (Obscure morning glory).